A 395-amino-acid polypeptide reads, in one-letter code: Vascular endothelial growth factor A, long form (395 aa).

Disordered stretches follow at residues 1-45 (MTDR…VEGV) and 73-175 (EAEP…AGPG). The span at 73–85 (EAEPSGAARSASS) shows a compositional bias: low complexity. The segment covering 91–102 (QPEEGEEEEEKE) has biased composition (acidic residues). 2 stretches are compositionally biased toward low complexity: residues 123-143 (AAVC…ARAS) and 165-175 (RRGSASRAGPG). Disulfide bonds link Cys-232–Cys-274, Cys-263–Cys-308, and Cys-267–Cys-310. Asn-281 carries N-linked (GlcNAc...) asparagine glycosylation. The span at 314–323 (KDRARQEKKS) shows a compositional bias: basic and acidic residues. The tract at residues 314–344 (KDRARQEKKSVRGKGKGQKRKRKKSRYKSWS) is disordered. A compositionally biased stretch (basic residues) spans 324–340 (VRGKGKGQKRKRKKSRY).

This sequence belongs to the PDGF/VEGF growth factor family. Homodimer; disulfide-linked. Also found as heterodimer with PGF. Interacts with NRP1. Interacts with isoform 2 of BSG. Interacts with CD82; this interaction inhibits VEGFA-mediated signaling pathway. In terms of processing, produced by use of an alternative upstream CUG codon and post-translationally processed into the N-terminal N-VEGF form and the C-terminal secreted VEGFA form. As to expression, higher expression in pituitary tumors than the pituitary gland. Widely expressed. In terms of tissue distribution, not widely expressed.

The protein localises to the cytoplasm. Its subcellular location is the nucleus. It localises to the secreted. The protein resides in the endoplasmic reticulum. It is found in the golgi apparatus. The protein localises to the extracellular space. Its subcellular location is the extracellular matrix. Participates in the induction of key genes involved in the response to hypoxia and in the induction of angiogenesis such as HIF1A. Involved in protecting cells from hypoxia-mediated cell death. In terms of biological role, growth factor active in angiogenesis, vasculogenesis and endothelial cell growth. Induces endothelial cell proliferation, promotes cell migration, inhibits apoptosis and induces permeabilization of blood vessels. Binds to the FLT1/VEGFR1 and KDR/VEGFR2 receptors, heparan sulfate and heparin. Binds to the NRP1/neuropilin-1 receptor. Binding to NRP1 initiates a signaling pathway needed for motor neuron axon guidance and cell body migration, including for the caudal migration of facial motor neurons from rhombomere 4 to rhombomere 6 during embryonic development. Also binds the DEAR/FBXW7-AS1 receptor. Its function is as follows. Binds to the KDR receptor but does not activate downstream signaling pathways, does not activate angiogenesis and inhibits tumor growth. The chain is Vascular endothelial growth factor A, long form (VEGFA) from Homo sapiens (Human).